We begin with the raw amino-acid sequence, 323 residues long: Oligodendrocyte transcription factor 2 (323 aa).

Composition is skewed to polar residues over residues 1–13 (MDSD…SRPS) and 27–45 (KGSS…STPS). The disordered stretch occupies residues 1–107 (MDSDASLVSS…KKQMTEPELQ (107 aa)). The segment covering 76–93 (KSSSSSTSSSTSSAAASS) has biased composition (low complexity). Residues 108 to 162 (QLRLKINSRERKRMHDLNIAMDGLREVMPYAHGPSVRKLSKIATLLLARNYILML) enclose the bHLH domain.

As to quaternary structure, interacts with NKX2-2. Interacts with ZNF488. As to expression, expressed in the brain, in oligodendrocytes. Strongly expressed in oligodendrogliomas, while expression is weak to moderate in astrocytomas. Expression in glioblastomas highly variable.

The protein resides in the nucleus. It is found in the cytoplasm. In terms of biological role, required for oligodendrocyte and motor neuron specification in the spinal cord, as well as for the development of somatic motor neurons in the hindbrain. Functions together with ZNF488 to promote oligodendrocyte differentiation. Cooperates with OLIG1 to establish the pMN domain of the embryonic neural tube. Antagonist of V2 interneuron and of NKX2-2-induced V3 interneuron development. In Homo sapiens (Human), this protein is Oligodendrocyte transcription factor 2 (OLIG2).